Reading from the N-terminus, the 412-residue chain is uncharacterized protein (412 aa).

A TRAM domain is found at 6–64 (ELAKGDIISVEVLRPAHGGEGIGHHDGRVIFVKGGIPGDVVDVEIAQLKKKWARGEVVK). Residues glutamine 242, tyrosine 278, glutamate 300, and aspartate 341 each coordinate S-adenosyl-L-methionine. The active-site Nucleophile is the cysteine 368.

It belongs to the class I-like SAM-binding methyltransferase superfamily. RNA M5U methyltransferase family.

This is an uncharacterized protein from Corynebacterium glutamicum (strain ATCC 13032 / DSM 20300 / JCM 1318 / BCRC 11384 / CCUG 27702 / LMG 3730 / NBRC 12168 / NCIMB 10025 / NRRL B-2784 / 534).